The sequence spans 131 residues: MARPPPPDTPARRRKQAAHARGLAAEDRAAAVLEAQSFRILARRLRTSAGELDLVARRDDLLVFCEVKLRRSLAEAAESLQLRQRRRIIAAAELFLADHPELAPLAMRFDAILLGRDGGAEHLEGAFELEG.

It belongs to the UPF0102 family.

This Azorhizobium caulinodans (strain ATCC 43989 / DSM 5975 / JCM 20966 / LMG 6465 / NBRC 14845 / NCIMB 13405 / ORS 571) protein is UPF0102 protein AZC_4471.